The chain runs to 331 residues: Tetraacyldisaccharide 4'-kinase (331 aa).

55-62 lines the ATP pocket; the sequence is TAGGNGKT.

Belongs to the LpxK family.

It carries out the reaction a lipid A disaccharide + ATP = a lipid IVA + ADP + H(+). Its pathway is glycolipid biosynthesis; lipid IV(A) biosynthesis; lipid IV(A) from (3R)-3-hydroxytetradecanoyl-[acyl-carrier-protein] and UDP-N-acetyl-alpha-D-glucosamine: step 6/6. In terms of biological role, transfers the gamma-phosphate of ATP to the 4'-position of a tetraacyldisaccharide 1-phosphate intermediate (termed DS-1-P) to form tetraacyldisaccharide 1,4'-bis-phosphate (lipid IVA). The protein is Tetraacyldisaccharide 4'-kinase of Edwardsiella ictaluri (strain 93-146).